A 1128-amino-acid polypeptide reads, in one-letter code: Nck-associated protein 1 (1128 aa).

S2 is subject to N-acetylserine. The tract at residues 640-665 (AVNKKSKKQTGKKGEPEREKPGVESM) is disordered. Basic and acidic residues predominate over residues 651–665 (KKGEPEREKPGVESM). Residues 995–1015 (IACLLMVFVAVSLPTLASNVM) form a helical membrane-spanning segment.

Belongs to the HEM-1/HEM-2 family. Component of the WAVE1 complex composed of ABI2, CYFIP1 or CYFIP2, BRK1, NCKAP1 and WASF1/WAVE1. Within the complex, a heterodimer containing NCKAP1 and CYFIP1 interacts with a heterotrimer formed by WAVE1, ABI2 and BRK1. Component of the WAVE2 complex composed of ABI1, CYFIP1/SRA1, NCKAP1/NAP1 and WASF2/WAVE2. CYFIP2 binds to activated RAC1 which causes the complex to dissociate, releasing activated WASF1. The complex can also be activated by NCK1. Associates preferentially with the first SH3 domain of NCK. Interacts with NYAP1, NYAP2 and MYO16. Interacts with TMEM132D. Preferentially expressed in brain, heart, liver and testis.

It is found in the cell membrane. The protein localises to the cell projection. It localises to the lamellipodium membrane. Part of the WAVE complex that regulates lamellipodia formation. The WAVE complex regulates actin filament reorganization via its interaction with the Arp2/3 complex. Actin remodeling activity is regulated by RAC1. As component of the WAVE1 complex, required for BDNF-NTRK2 endocytic trafficking and signaling from early endosomes. The protein is Nck-associated protein 1 (Nckap1) of Rattus norvegicus (Rat).